The following is a 215-amino-acid chain: Cytochrome b6 (215 aa).

A helical membrane pass occupies residues 32-52 (IFHCLGGITLTCFLVQVATGF). C35 is a binding site for heme c. Residues H86 and H100 each coordinate heme b. The next 3 membrane-spanning stretches (helical) occupy residues 90 to 110 (ASMMVLMMILHVFRVYLTGGF), 116 to 136 (LTWVTGVVLAVLTASFGVTGY), and 186 to 206 (LHTFVLPLLTAVFMLMHFSMI). Heme b is bound by residues H187 and H202.

This sequence belongs to the cytochrome b family. PetB subfamily. As to quaternary structure, the 4 large subunits of the cytochrome b6-f complex are cytochrome b6, subunit IV (17 kDa polypeptide, PetD), cytochrome f and the Rieske protein, while the 4 small subunits are PetG, PetL, PetM and PetN. The complex functions as a dimer. Heme b is required as a cofactor. Heme c serves as cofactor.

It localises to the plastid. Its subcellular location is the chloroplast thylakoid membrane. Its function is as follows. Component of the cytochrome b6-f complex, which mediates electron transfer between photosystem II (PSII) and photosystem I (PSI), cyclic electron flow around PSI, and state transitions. The chain is Cytochrome b6 from Nymphaea alba (White water-lily).